We begin with the raw amino-acid sequence, 131 residues long: Protein DfrA (131 aa).

Belongs to the RutC family.

The sequence is that of Protein DfrA (dfrA) from Myxococcus xanthus.